We begin with the raw amino-acid sequence, 301 residues long: MKFATGELYNRMFVGLIIDDEKIMDLQKAEKKLFELETIPGSLIECIAEGDKFVAHARQLAEWAKKPNDELGSFMYSLSEVKLHAPIPKPSKNIICIGKNYRDHAIEMGSEADIPEHPMVFTKSPVTVTGHGDIVKSHEEVTSQLDYEGELAVVIGKSGTRISKEDAYDHVFGYTIVNDITARDLQKRHKQFFIGKSLDTTCPMGPVLVHKSSIQEPERLKVETRVNGELRQSGSASDMIFSIPELIETLSKGMTLEAGDIIATGTPSGVGKGFTPPKFLRSGDKIDITIDPIGTLSNQIG.

K99 contributes to the oxalate binding site. Mn(2+) is bound by residues E148, E150, and D179. 2 residues coordinate oxalate: K196 and T266.

It belongs to the FAH family. In terms of assembly, homodimer. Requires Mg(2+) as cofactor. Mn(2+) serves as cofactor.

Its subcellular location is the cytoplasm. The enzyme catalyses oxaloacetate = enol-oxaloacetate. It carries out the reaction oxaloacetate + H(+) = pyruvate + CO2. Functionally, tautomerase that converts enol-oxaloacetate to the keto form of oxaloacetate. Also shows weak oxaloacetate decarboxylase (ODx), catalyzing the decarboxylation of oxaloacetate (OAA) to pyruvate and CO(2). In Bacillus subtilis (strain 168), this protein is Oxaloacetate tautomerase YisK.